Here is a 591-residue protein sequence, read N- to C-terminus: MTIAITDVVLRDAHQSLFATRLRLDDMLPIAAQLDDVGYGSLECWGGATFDACIRFLGEDPWLRLRELKKAMPKTPLQMLLRGQNLLGYRHYADDVVERFVERAVKNGMDVFRVFDAMNDPRNMKAALQAVRSHGAHAQGTLSYTTSPAHTLQTWLDLTEQLLETGVDSIAIKDMSGILTPMAAFELVSEIKKRFEVRLHLHCHATTGMAEMALLKAIEAGVDGVDTAISSMSATYGHPATEALVATLAGTEHDTGLDILKLENIAAYFREVRKKYHAFEGQLKGYDSRILVAQVPGGMLTNLESQLKQQNAADRLDQVLAEIPRVREDLGFIPLVTPTSQIVGTQAVLNVLTGERYKTIAKETAGILKGEYGHTPVPVNAALQARVLEGSAPVTCRPADLLKPELAELEADVRRQAQEKGITLAGNAIDDVLTVALFPQIGLKFLENRHNPAAFEPLPQAEAAQPVAKAEKPAASGIYTVEVEGKAFVVRVSDGGDISQLTTAVPAASSAPVQAAAPAGAGTPVTAPLAGNIWKVIATEGQSVAEGDVLLILEAMKMETEIRAAQAGTVRGIAVKSGDAVSVGDTLMTLA.

In terms of domain architecture, Pyruvate carboxyltransferase spans 3–263 (IAITDVVLRD…DTGLDILKLE (261 aa)). The region spanning 518–591 (PAGAGTPVTA…SVGDTLMTLA (74 aa)) is the Biotinyl-binding domain. Lysine 557 bears the N6-biotinyllysine mark.

Composed of three chains (alpha, beta, and gamma). Requires biotin as cofactor.

The catalysed reaction is oxaloacetate + 2 Na(+)(in) + H(+) = pyruvate + 2 Na(+)(out) + CO2. Its function is as follows. Catalyzes the decarboxylation of oxaloacetate coupled to Na(+) translocation. This is Oxaloacetate decarboxylase alpha chain (oadA1) from Salmonella typhi.